We begin with the raw amino-acid sequence, 536 residues long: Portal protein (536 aa).

It belongs to the podoviridae portal protein family. In terms of assembly, homododecamer. Interacts with major capsid protein. Interacts with the tail tube protein gp11. Interacts with the terminase large subunit. Interacts with the internal virion protein gp14.

It is found in the virion. Forms the portal vertex of the capsid. This portal plays critical roles in head assembly, genome packaging, neck/tail attachment, and genome ejection. The portal protein multimerizes as a single ring-shaped homododecamer arranged around a central channel. In Escherichia phage T7 (Bacteriophage T7), this protein is Portal protein.